Reading from the N-terminus, the 706-residue chain is Histone deacetylase HDA1 (706 aa).

Over residues 1-24 (MDSVMVKKEVLENPDHDLKRKLEE) the composition is skewed to basic and acidic residues. Residues 1-36 (MDSVMVKKEVLENPDHDLKRKLEENKEEENSLSTTS) are disordered. The segment at 67 to 396 (RYHAKIFTSY…ALSVAKVLIG (330 aa)) is histone deacetylase. Residue histidine 206 is part of the active site.

The protein belongs to the histone deacetylase family. HD type 2 subfamily.

The protein localises to the nucleus. The catalysed reaction is N(6)-acetyl-L-lysyl-[histone] + H2O = L-lysyl-[histone] + acetate. Responsible for the deacetylation of lysine residues on the N-terminal part of the core histones (H2A, H2B, H3 and H4). Histone deacetylation gives a tag for epigenetic repression and plays an important role in transcriptional regulation, cell cycle progression and developmental events. Histone deacetylases act via the formation of large multiprotein complexes. The chain is Histone deacetylase HDA1 (HDA1) from Saccharomyces cerevisiae (strain ATCC 204508 / S288c) (Baker's yeast).